The primary structure comprises 643 residues: Transmembrane protein 62 (643 aa).

The chain crosses the membrane as a helical span at residues 9–29; sequence VVAGLAAAAVAALLLEHYGLA. The N-linked (GlcNAc...) asparagine glycan is linked to N180. The next 4 helical transmembrane spans lie at 431–451, 484–504, 532–552, and 572–592; these read IVARVLFVLIVLIQLTTLITF, YSVLLLTLYTVLGPWFVGEII, GIIQLVFFNIPLMAYVCWSLL, and IIPVYLLILLLYIWQVYSCYF.

The protein resides in the membrane. The sequence is that of Transmembrane protein 62 (Tmem62) from Mus musculus (Mouse).